Reading from the N-terminus, the 350-residue chain is WD repeat-containing protein DWA2 (350 aa).

6 WD repeats span residues 39-79, 118-158, 166-205, 206-246, 250-290, and 311-350; these read KEEN…FDQR, AHVG…KSAE, GMRH…KNNS, IERA…FPVQ, GHTH…EHKT, and DYED…LPRR.

As to quaternary structure, interacts with ABI5 and DDB1A and DWA1.

Its subcellular location is the nucleus. It functions in the pathway protein modification; protein ubiquitination. Its function is as follows. Component of the CUL4-RBX1-DDB1-DWA1/DWA2 E3 ubiquitin-protein ligase complex that acts as a negative regulator in abscisic acid (ABA) signaling. May function as the substrate recognition module within this complex leading to ABI5 degradation. Functionally redundant with DWA1. The chain is WD repeat-containing protein DWA2 (DWA2) from Arabidopsis thaliana (Mouse-ear cress).